We begin with the raw amino-acid sequence, 363 residues long: Sensor protein BasS (363 aa).

Residues 1-13 lie on the Cytoplasmic side of the membrane; the sequence is MHFLRRPISLRQR. Residues 14–34 form a helical membrane-spanning segment; it reads LILTIGAILLVFELISVFWLW. The Periplasmic portion of the chain corresponds to 35 to 64; the sequence is HESTEQIQLFEQALRDNRNNDRHIMREIRE. A helical transmembrane segment spans residues 65-88; that stretch reads AVASLIVPGVFMVSLTLFICYQAV. Residues 89-141 form the HAMP domain; it reads RRITRPLAELQKELEARTADNLTPIAIHSATLEIEAVVSALNDLVSRLTSTLD. Over 89 to 363 the chain is Cytoplasmic; sequence RRITRPLAEL…KKDQYVANQI (275 aa). The Histidine kinase domain maps to 149 to 357; it reads DVAHELRTPL…RAWVRLKKDQ (209 aa). H152 is modified (phosphohistidine; by autocatalysis).

In terms of processing, autophosphorylated.

The protein resides in the cell inner membrane. It carries out the reaction ATP + protein L-histidine = ADP + protein N-phospho-L-histidine.. Functionally, member of the two-component regulatory system BasS/BasR Autophosphorylates and activates BasR by phosphorylation. This Escherichia coli (strain K12) protein is Sensor protein BasS (basS).